The primary structure comprises 303 residues: tRNA dimethylallyltransferase 1 (303 aa).

An ATP-binding site is contributed by 9–16 (GPTASGKT). 11 to 16 (TASGKT) serves as a coordination point for substrate. 3 interaction with substrate tRNA regions span residues 34–37 (DSAL), 158–162 (QRLIR), and 239–244 (RCVGYR).

Belongs to the IPP transferase family. As to quaternary structure, monomer. The cofactor is Mg(2+).

The catalysed reaction is adenosine(37) in tRNA + dimethylallyl diphosphate = N(6)-dimethylallyladenosine(37) in tRNA + diphosphate. Functionally, catalyzes the transfer of a dimethylallyl group onto the adenine at position 37 in tRNAs that read codons beginning with uridine, leading to the formation of N6-(dimethylallyl)adenosine (i(6)A). The chain is tRNA dimethylallyltransferase 1 from Shewanella sediminis (strain HAW-EB3).